The sequence spans 201 residues: MSSLRQSEIKRKTNETDISVFINLDGSGISEIDTGIPFLDHMLHQISSHGLFDLQIKAIGDTHIDDHHTNEDVGIALGKAFSKALGERKGISRFGHFFAPLDEALVQVTLDCSGRPHLSYDLQLKAPRIGNYDTELVREFFIAFVNNSGITLHINQIRGSNSHHIVEACFKAFSRAMRMATEIDPRRSDSIPSSKGMLEKQ.

It belongs to the imidazoleglycerol-phosphate dehydratase family.

It localises to the cytoplasm. It catalyses the reaction D-erythro-1-(imidazol-4-yl)glycerol 3-phosphate = 3-(imidazol-4-yl)-2-oxopropyl phosphate + H2O. Its pathway is amino-acid biosynthesis; L-histidine biosynthesis; L-histidine from 5-phospho-alpha-D-ribose 1-diphosphate: step 6/9. The protein is Imidazoleglycerol-phosphate dehydratase of Prochlorococcus marinus (strain AS9601).